We begin with the raw amino-acid sequence, 176 residues long: Adipose-secreted signaling protein (176 aa).

The tract at residues 1-30 (MATAGKGSKGKGTGVRFTPEGTQGHPQEGT) is disordered. The segment covering 20-30 (EGTQGHPQEGT) has biased composition (polar residues).

This sequence belongs to the ADISSP family.

May be involved in thermogenesis and glucose homeostasis. The protein is Adipose-secreted signaling protein of Taeniopygia guttata (Zebra finch).